Reading from the N-terminus, the 132-residue chain is Small ribosomal subunit protein uS8 (132 aa).

The protein belongs to the universal ribosomal protein uS8 family. As to quaternary structure, part of the 30S ribosomal subunit. Contacts proteins S5 and S12.

Its function is as follows. One of the primary rRNA binding proteins, it binds directly to 16S rRNA central domain where it helps coordinate assembly of the platform of the 30S subunit. The chain is Small ribosomal subunit protein uS8 from Borreliella burgdorferi (strain ZS7) (Borrelia burgdorferi).